Consider the following 330-residue polypeptide: Beta-ketoacyl-[acyl-carrier-protein] synthase III (330 aa).

Catalysis depends on residues Cys115 and His255. The interval 256–260 (QANFR) is ACP-binding. Residue Asn285 is part of the active site.

It belongs to the thiolase-like superfamily. FabH family. As to quaternary structure, homodimer.

Its subcellular location is the cytoplasm. It catalyses the reaction malonyl-[ACP] + acetyl-CoA + H(+) = 3-oxobutanoyl-[ACP] + CO2 + CoA. It functions in the pathway lipid metabolism; fatty acid biosynthesis. Its function is as follows. Catalyzes the condensation reaction of fatty acid synthesis by the addition to an acyl acceptor of two carbons from malonyl-ACP. Catalyzes the first condensation reaction which initiates fatty acid synthesis and may therefore play a role in governing the total rate of fatty acid production. Possesses both acetoacetyl-ACP synthase and acetyl transacylase activities. Its substrate specificity determines the biosynthesis of branched-chain and/or straight-chain of fatty acids. This chain is Beta-ketoacyl-[acyl-carrier-protein] synthase III, found in Helicobacter pylori (strain P12).